A 137-amino-acid chain; its full sequence is NADPH-dependent 7-cyano-7-deazaguanine reductase (137 aa).

The active-site Thioimide intermediate is Cys-50. Asp-57 (proton donor) is an active-site residue. Substrate-binding positions include 72–74 and 91–92; these read VEL and HE.

It belongs to the GTP cyclohydrolase I family. QueF type 1 subfamily.

The protein resides in the cytoplasm. The catalysed reaction is 7-aminomethyl-7-carbaguanine + 2 NADP(+) = 7-cyano-7-deazaguanine + 2 NADPH + 3 H(+). It participates in tRNA modification; tRNA-queuosine biosynthesis. Functionally, catalyzes the NADPH-dependent reduction of 7-cyano-7-deazaguanine (preQ0) to 7-aminomethyl-7-deazaguanine (preQ1). The polypeptide is NADPH-dependent 7-cyano-7-deazaguanine reductase (Synechocystis sp. (strain ATCC 27184 / PCC 6803 / Kazusa)).